Here is a 159-residue protein sequence, read N- to C-terminus: Sulfur carrier protein DsrE2 (159 aa).

The next 2 helical transmembrane spans lie at 21-43 (PFIL…TFYG) and 72-91 (WFPV…TAMM).

The protein localises to the cell membrane. Its pathway is energy metabolism; sulfur metabolism. Its function is as follows. Sulfur carrier protein probably involved in sulfur trafficking for oxidative dissimilatory sulfur metabolism. May be a component of a cytoplasmic sulfur relay system delivering sulfur to DsrC. Binds sulfur in the presence of sulfide in vitro. The protein is Sulfur carrier protein DsrE2 of Allochromatium vinosum (strain ATCC 17899 / DSM 180 / NBRC 103801 / NCIMB 10441 / D) (Chromatium vinosum).